A 707-amino-acid polypeptide reads, in one-letter code: Mitochondrial disaggregase (707 aa).

The transit peptide at 1-36 directs the protein to the mitochondrion; it reads MLGSLVLRRKALAPRLLLRLLRSPTLRGHGGASGRN. Residues 92–126 are autoinhibitory; the sequence is PGPEETLPGQDSWNGVPSRAGLGMCALAAALVVHC. ANK repeat units follow at residues 133-162, 166-195, 265-295, and 298-327; these read NKDA…DVNA, LGWT…DPNL, KGCT…PLQR, and MGHT…EKQR. ATP-binding residues include His346, Ile348, Ser383, Gly384, Ile385, Gly386, Lys387, Thr388, Glu455, and Asn496. The regulatory; slows ATPase and disaggregase activities stretch occupies residues 507–535; the sequence is LQLRQEALEMSRNRIAENLGDVQISDKIT. Arg561 serves as a coordination point for ATP. An N6-acetyllysine modification is found at Lys589. Arg620 provides a ligand contact to ATP.

The protein belongs to the ClpA/ClpB family. Homododecamer when substrate-bound; the homododecamer consists of 2 homohexamers stacked head-to-head via ANK repeat-mediated interactions. The active substrate-bound form is likely to exist in a dynamic equilibrium between homohexamers and homododecamers. Homotetradecamer in the unbound state which is remodeled upon substrate binding into the homododecamer. Interacts with PHB and PHB2. Interacts with MAVS; the interaction is enhanced by Sendai virus infection. Post-translationally, proteolytically cleaved by protease PARL. ATP-dependent protein disaggregase activity is stimulated by PARL-mediated cleavage of the N-terminal autoinhibitory peptide. As to expression, widely expressed (at protein level). Expressed in fetal, as well as in adult tissues, with highest levels in adult brain, including thalamus, hippocampus, occipital cortex and parietal cortex. Low expression in granulocytes.

The protein resides in the mitochondrion intermembrane space. It catalyses the reaction ATP + H2O = ADP + phosphate + H(+). With respect to regulation, disaggregase activity is inhibited by ADP. Functions as a regulatory ATPase and participates in secretion/protein trafficking process. Has ATP-dependent protein disaggregase activity and is required to maintain the solubility of key mitochondrial proteins. Involved in mitochondrial-mediated antiviral innate immunity, activates RIG-I-mediated signal transduction and production of IFNB1 and pro-inflammatory cytokine IL6. Plays a role in granulocyte differentiation. In Homo sapiens (Human), this protein is Mitochondrial disaggregase.